Reading from the N-terminus, the 297-residue chain is Cell division protein FtsX (297 aa).

At 1-21 the chain is on the cytoplasmic side; sequence MRFGFLLNEVLTGFRRNVTMT. A helical membrane pass occupies residues 22–42; it reads IAMILTTAISVGLFGGGMLVV. The Extracellular portion of the chain corresponds to 43–171; it reads RLADSSRAIY…LFAVLDGLSN (129 aa). Residues 172–192 form a helical membrane-spanning segment; that stretch reads AAFAVALVQAIGAILLIANMV. Topologically, residues 193–219 are cytoplasmic; the sequence is QVAAYTRRTEIGIMRLVGASRWYTQLP. The helical transmembrane segment at 220 to 240 threads the bilayer; sequence FLVEAMLAATMGVGIAVAGLM. Over 241–267 the chain is Extracellular; sequence VVRALFLENALNQFYQANLIAKVDYAD. Residues 268–288 traverse the membrane as a helical segment; that stretch reads ILFITPWLLLLGVAMSGLTAY. Topologically, residues 289-297 are cytoplasmic; sequence LTLRLYVRR.

It belongs to the ABC-4 integral membrane protein family. FtsX subfamily. Forms a membrane-associated complex with FtsE.

It localises to the cell membrane. In terms of biological role, part of the ABC transporter FtsEX involved in cellular division. In Mycobacterium tuberculosis (strain ATCC 25177 / H37Ra), this protein is Cell division protein FtsX.